A 166-amino-acid polypeptide reads, in one-letter code: Large ribosomal subunit protein mL41 (166 aa).

The N-terminal 26 residues, 1–26 (MQNCIKLVPLALKCPQRAISTSAVLD), are a transit peptide targeting the mitochondrion.

This sequence belongs to the mitochondrion-specific ribosomal protein mL41 family. As to quaternary structure, component of the mitochondrial ribosome large subunit (39S) which comprises a 16S rRNA and about 50 distinct proteins.

It is found in the mitochondrion. This is Large ribosomal subunit protein mL41 (mRpL41) from Drosophila pseudoobscura pseudoobscura (Fruit fly).